Reading from the N-terminus, the 156-residue chain is Small ribosomal subunit protein uS7 (156 aa).

Belongs to the universal ribosomal protein uS7 family. In terms of assembly, part of the 30S ribosomal subunit. Contacts proteins S9 and S11.

Functionally, one of the primary rRNA binding proteins, it binds directly to 16S rRNA where it nucleates assembly of the head domain of the 30S subunit. Is located at the subunit interface close to the decoding center, probably blocks exit of the E-site tRNA. In Bradyrhizobium sp. (strain BTAi1 / ATCC BAA-1182), this protein is Small ribosomal subunit protein uS7.